A 421-amino-acid chain; its full sequence is Tyrosine--tRNA ligase (421 aa).

L-tyrosine is bound at residue Y35. Positions 40–49 match the 'HIGH' region motif; it reads PTGPSLHAGH. Y169 and Q173 together coordinate L-tyrosine. The short motif at 229-233 is the 'KMSKS' region element; sequence KFGKS. K232 is a binding site for ATP. The S4 RNA-binding domain maps to 354 to 420; that stretch reads RTIVDLLIAS…GKKNFAGVKI (67 aa).

The protein belongs to the class-I aminoacyl-tRNA synthetase family. TyrS type 1 subfamily. As to quaternary structure, homodimer.

The protein resides in the cytoplasm. It carries out the reaction tRNA(Tyr) + L-tyrosine + ATP = L-tyrosyl-tRNA(Tyr) + AMP + diphosphate + H(+). Functionally, catalyzes the attachment of tyrosine to tRNA(Tyr) in a two-step reaction: tyrosine is first activated by ATP to form Tyr-AMP and then transferred to the acceptor end of tRNA(Tyr). This is Tyrosine--tRNA ligase from Corynebacterium efficiens (strain DSM 44549 / YS-314 / AJ 12310 / JCM 11189 / NBRC 100395).